A 255-amino-acid polypeptide reads, in one-letter code: Cytochrome c oxidase subunit 3 (255 aa).

Transmembrane regions (helical) follow at residues 12–29, 57–77, 91–111, 126–146, 155–175, 196–216, and 235–255; these read INII…STGL, LKYL…INGI, IFGM…WGFF, LEAF…ISLI, YFEV…FLSF, FNVL…FALM, and GMYW…LFLL.

The protein belongs to the cytochrome c oxidase subunit 3 family. In terms of assembly, component of the cytochrome c oxidase (complex IV, CIV), a multisubunit enzyme composed of a catalytic core of 3 subunits and several supernumerary subunits. The complex exists as a monomer or a dimer and forms supercomplexes (SCs) in the inner mitochondrial membrane with ubiquinol-cytochrome c oxidoreductase (cytochrome b-c1 complex, complex III, CIII).

The protein resides in the mitochondrion inner membrane. It catalyses the reaction 4 Fe(II)-[cytochrome c] + O2 + 8 H(+)(in) = 4 Fe(III)-[cytochrome c] + 2 H2O + 4 H(+)(out). Component of the cytochrome c oxidase, the last enzyme in the mitochondrial electron transport chain which drives oxidative phosphorylation. The respiratory chain contains 3 multisubunit complexes succinate dehydrogenase (complex II, CII), ubiquinol-cytochrome c oxidoreductase (cytochrome b-c1 complex, complex III, CIII) and cytochrome c oxidase (complex IV, CIV), that cooperate to transfer electrons derived from NADH and succinate to molecular oxygen, creating an electrochemical gradient over the inner membrane that drives transmembrane transport and the ATP synthase. Cytochrome c oxidase is the component of the respiratory chain that catalyzes the reduction of oxygen to water. Electrons originating from reduced cytochrome c in the intermembrane space (IMS) are transferred via the dinuclear copper A center (CU(A)) of subunit 2 and heme A of subunit 1 to the active site in subunit 1, a binuclear center (BNC) formed by heme A3 and copper B (CU(B)). The BNC reduces molecular oxygen to 2 water molecules using 4 electrons from cytochrome c in the IMS and 4 protons from the mitochondrial matrix. The protein is Cytochrome c oxidase subunit 3 (MT-CO3) of Theileria annulata.